The sequence spans 772 residues: Delta-like protein A (772 aa).

A signal peptide spans 1–20 (MGRHLLLLLFSILYMLLCQA). Over 21-536 (SSSGVFELKL…SQIASDVPWT (516 aa)) the chain is Extracellular. The 45-residue stretch at 179-223 (FVCDEHYYGEGCSVFCRPRDDAFGHFTCGERGEIICDAGWKGQYC) folds into the DSL domain. Intrachain disulfides connect Cys181–Cys190, Cys194–Cys206, Cys214–Cys223, Cys228–Cys239, Cys232–Cys245, Cys259–Cys270, Cys265–Cys276, Cys278–Cys287, Cys294–Cys306, Cys300–Cys316, Cys318–Cys327, Cys334–Cys345, Cys339–Cys354, Cys356–Cys365, Cys372–Cys383, Cys377–Cys393, Cys395–Cys404, Cys411–Cys422, Cys416–Cys431, Cys433–Cys442, Cys449–Cys460, Cys454–Cys469, Cys471–Cys480, Cys487–Cys498, Cys492–Cys507, and Cys509–Cys518. EGF-like domains follow at residues 225–257 (EPIC…RYCD), 257–288 (DECI…LFCN), and 290–328 (DLNY…ASCE). Residues 330–366 (EVNECTGNPCRNGGSCTDMENTYSCTCPPGFYGKNCE) form the EGF-like 4; calcium-binding domain. 4 consecutive EGF-like domains span residues 368-405 (SAMT…FNCE), 407-443 (KIDH…MNCD), 445-481 (AGDE…RNCS), and 483-519 (PVSR…RNCQ). Residue Asn479 is glycosylated (N-linked (GlcNAc...) asparagine). Residues 537–557 (AVGSGVLLVLLLVVACAVVVV) form a helical membrane-spanning segment. At 558 to 772 (CVRSKVQQRR…KDECVIATEV (215 aa)) the chain is on the cytoplasmic side. The segment at 688 to 722 (EEKRRKRLKSDASEKSKYSESRYSESKYSESKYSE) is disordered. A compositionally biased stretch (basic and acidic residues) spans 696–722 (KSDASEKSKYSESRYSESKYSESKYSE).

Interacts with mib. Ubiquitinated by mib, leading to its endocytosis and subsequent degradation. Ubiquitinated by the ECS(ASB11) complex, leading to its degradation by the proteasome. Expressed in nervous system. In the developing nervous system, it is expressed in overlapping regions with deltaB (dlb) and deltaD (dld); in the neural plate, dla is expressed in patches of contiguous cells with dld, while dlb is confined to scattered cells within those patches that will differentiate as neurons. In 24 hours embryos, expressed in the hindbrain in stripes adjacent to rhombomere boundaries, but not in the actual boundary cells. During gastrulation and tail formation, expressed in embryonic midline cells. Expressed in hair cells of inner ear.

Its subcellular location is the membrane. Functionally, acts as a ligand for Notch receptors and is involved in primary neurogenesis. Can activate Notch receptors, thereby playing a key role in lateral inhibition, a process that prevents the immediate neighbors of each nascent neural cell from simultaneously embarking on neural differentiation. Required for boundary formation during segmentation of the hindbrain. Required for midline cell fate specification prior to germ layer formation; regulates specification of floorplate, notochord and hypochord. In inner ear, it prevents adjacent cells from adopting the same cell fate. Plays a role in angiogenesis. The protein is Delta-like protein A (dla) of Danio rerio (Zebrafish).